Reading from the N-terminus, the 969-residue chain is Isoleucine--tRNA ligase (969 aa).

The short motif at 68-78 (PYANGALHMGH) is the 'HIGH' region element. Glu-585 provides a ligand contact to L-isoleucyl-5'-AMP. Positions 626–630 (KMSKS) match the 'KMSKS' region motif. Lys-629 lines the ATP pocket. Cys-939, Cys-942, Cys-959, and Cys-962 together coordinate Zn(2+).

The protein belongs to the class-I aminoacyl-tRNA synthetase family. IleS type 1 subfamily. In terms of assembly, monomer. Zn(2+) is required as a cofactor.

The protein localises to the cytoplasm. The catalysed reaction is tRNA(Ile) + L-isoleucine + ATP = L-isoleucyl-tRNA(Ile) + AMP + diphosphate. Its function is as follows. Catalyzes the attachment of isoleucine to tRNA(Ile). As IleRS can inadvertently accommodate and process structurally similar amino acids such as valine, to avoid such errors it has two additional distinct tRNA(Ile)-dependent editing activities. One activity is designated as 'pretransfer' editing and involves the hydrolysis of activated Val-AMP. The other activity is designated 'posttransfer' editing and involves deacylation of mischarged Val-tRNA(Ile). The protein is Isoleucine--tRNA ligase of Prochlorococcus marinus (strain MIT 9211).